Consider the following 876-residue polypeptide: DNA polymerase 1 (876 aa).

The protein belongs to the DNA polymerase type-B family.

The enzyme catalyses DNA(n) + a 2'-deoxyribonucleoside 5'-triphosphate = DNA(n+1) + diphosphate. This polymerase possesses two enzymatic activities: DNA synthesis (polymerase) and an exonucleolytic activity that degrades single-stranded DNA in the 3'- to 5'-direction. In Sulfolobus acidocaldarius (strain ATCC 33909 / DSM 639 / JCM 8929 / NBRC 15157 / NCIMB 11770), this protein is DNA polymerase 1 (dpo1).